Reading from the N-terminus, the 158-residue chain is Small ribosomal subunit protein uS9 (158 aa).

Belongs to the universal ribosomal protein uS9 family.

This chain is Small ribosomal subunit protein uS9, found in Brucella melitensis biotype 2 (strain ATCC 23457).